Reading from the N-terminus, the 491-residue chain is Probable G-protein coupled receptor Mth-like 7 (491 aa).

Residues 1–22 (MRLPWVIFCTVLLLIFTNNSNA) form the signal peptide. N-linked (GlcNAc...) asparagine glycans are attached at residues Asn-18 and Asn-42. The Extracellular segment spans residues 23–167 (DIPGCNYYDT…EEVSIQIFNK (145 aa)). 3 disulfides stabilise this stretch: Cys-27–Cys-80, Cys-82–Cys-87, and Cys-92–Cys-103. A helical transmembrane segment spans residues 168 to 188 (CGLIVWFQDGKFWVTVDLFME). The Cytoplasmic segment spans residues 189–222 (KQDYCLYRHNFDSDFPKSMWIIRHRCTSHISPGS). Residues 223 to 243 (LEILIITMICFVLTIAVYLYI) form a helical membrane-spanning segment. At 244 to 252 (KKLRNVTGK) the chain is on the extracellular side. Residue Asn-248 is glycosylated (N-linked (GlcNAc...) asparagine). A helical membrane pass occupies residues 253–273 (CIVCCIVSRFIQCLIMILDHL). The Cytoplasmic segment spans residues 274-325 (NLLNGICSPAGYSSHFFRMASNLWLSVISYHTWKVLTSLNRVDPNYRFLRYN). A helical transmembrane segment spans residues 326 to 346 (AFVWSTAAIMTGSIYIVNQIW). Residues 347–372 (ENDPSKWNWLPLVGFIRCSVKDWHPS) are Extracellular-facing. Residues 373-393 (VWIYISGPSLALSTFNVAMFA) traverse the membrane as a helical segment. At 394–434 (LTAIYIRKVKGGINKFTNEEEGRINCINFDSQTYLQFLRLS) the chain is on the cytoplasmic side. A helical transmembrane segment spans residues 435–455 (IVMGLTWIFNVIPYSARLHIF). Residues 456-458 (WEW) are Extracellular-facing. A helical membrane pass occupies residues 459–479 (VGIISEYFHSAFGIVLFVLLV). The Cytoplasmic portion of the chain corresponds to 480–491 (LKRSTWTLMMDS).

This sequence belongs to the G-protein coupled receptor 2 family. Mth subfamily.

It is found in the cell membrane. The polypeptide is Probable G-protein coupled receptor Mth-like 7 (mthl7) (Drosophila melanogaster (Fruit fly)).